The following is a 160-amino-acid chain: Protein CrtK (160 aa).

A run of 5 helical transmembrane segments spans residues 3 to 23, 37 to 57, 76 to 96, 101 to 121, and 129 to 149; these read LTLF…GAIF, WVPP…LMSI, LAFW…FFGL, GGML…VLFW, and LMFV…FSVW.

Belongs to the TspO/BZRP family.

It localises to the cell inner membrane. It functions in the pathway carotenoid biosynthesis; spheroidene biosynthesis. The protein is Protein CrtK (crtK) of Rhodobacter capsulatus (strain ATCC BAA-309 / NBRC 16581 / SB1003).